Consider the following 494-residue polypeptide: Nitrogenase molybdenum-iron protein alpha chain (494 aa).

The [8Fe-7S] cluster site is built by Cys-70, Cys-96, and Cys-162. Residues Cys-288 and His-455 each contribute to the [7Fe-Mo-9S-C-homocitryl] cluster site.

Belongs to the NifD/NifK/NifE/NifN family. As to quaternary structure, tetramer of two alpha and two beta chains. Forms complex with the iron protein (nitrogenase component 2). [8Fe-7S] cluster is required as a cofactor. Requires [7Fe-Mo-9S-C-homocitryl] cluster as cofactor.

The catalysed reaction is N2 + 8 reduced [2Fe-2S]-[ferredoxin] + 16 ATP + 16 H2O = H2 + 8 oxidized [2Fe-2S]-[ferredoxin] + 2 NH4(+) + 16 ADP + 16 phosphate + 6 H(+). Functionally, this molybdenum-iron protein is part of the nitrogenase complex that catalyzes the key enzymatic reactions in nitrogen fixation. The protein is Nitrogenase molybdenum-iron protein alpha chain (nifD) of Leptolyngbya boryana (Plectonema boryanum).